The primary structure comprises 44 residues: Cuticle protein CP459 (44 aa).

2 consecutive repeat copies span residues 3–20 (LLKG…KRLL) and 27–44 (VLLT…NVQF).

Calcified shell.

In Cancer pagurus (Rock crab), this protein is Cuticle protein CP459.